The primary structure comprises 292 residues: 4-hydroxy-tetrahydrodipicolinate synthase (292 aa).

Thr50 is a pyruvate binding site. Catalysis depends on Tyr139, which acts as the Proton donor/acceptor. Catalysis depends on Lys167, which acts as the Schiff-base intermediate with substrate. Pyruvate is bound at residue Ile208.

The protein belongs to the DapA family. As to quaternary structure, homotetramer; dimer of dimers.

Its subcellular location is the cytoplasm. It catalyses the reaction L-aspartate 4-semialdehyde + pyruvate = (2S,4S)-4-hydroxy-2,3,4,5-tetrahydrodipicolinate + H2O + H(+). Its pathway is amino-acid biosynthesis; L-lysine biosynthesis via DAP pathway; (S)-tetrahydrodipicolinate from L-aspartate: step 3/4. In terms of biological role, catalyzes the condensation of (S)-aspartate-beta-semialdehyde [(S)-ASA] and pyruvate to 4-hydroxy-tetrahydrodipicolinate (HTPA). The protein is 4-hydroxy-tetrahydrodipicolinate synthase of Oenococcus oeni (strain ATCC BAA-331 / PSU-1).